The following is an 898-amino-acid chain: Neutral alpha-glucosidase C (898 aa).

The tract at residues 154–173 (QRATKGNGQNTPAATSQENQ) is disordered. The span at 157–171 (TKGNGQNTPAATSQE) shows a compositional bias: polar residues. Catalysis depends on aspartate 495, which acts as the Nucleophile. Residue glutamate 498 is part of the active site. The Proton donor role is filled by aspartate 571.

It belongs to the glycosyl hydrolase 31 family.

The catalysed reaction is Hydrolysis of terminal, non-reducing (1-&gt;4)-linked alpha-D-glucose residues with release of alpha-D-glucose.. Has alpha-glucosidase activity. This chain is Neutral alpha-glucosidase C (Ganc), found in Mus musculus (Mouse).